The following is a 268-amino-acid chain: Unknown seed protein USP (268 aa).

The signal sequence occupies residues 1–25 (MEFAHLTVLSLFCLAFVGITATSSG). Residues 68 to 259 (LFFEHDLHPG…GNKAAAWVPN (192 aa)) enclose the BURP domain.

As to expression, expressed in seeds. Detected only in the embryo. In germinating seedlings, detected in roots, root caps, root hairs, vascular bundle, mesophyll cells and epidermal cells of the cotyledons and the hypocotyl.

Its subcellular location is the golgi apparatus. It is found in the golgi stack. The protein resides in the prevacuolar compartment. Associated with the protein storage vacuole formation. This is Unknown seed protein USP from Vicia faba (Broad bean).